We begin with the raw amino-acid sequence, 300 residues long: N-acetylmannosamine kinase (300 aa).

Residues 5 to 12 (ALDIGGTK) and 132 to 139 (GVGGGIVL) each bind ATP. Zn(2+) contacts are provided by histidine 156, cysteine 166, cysteine 168, and cysteine 173.

The protein belongs to the ROK (NagC/XylR) family. NanK subfamily. As to quaternary structure, homodimer.

The catalysed reaction is an N-acyl-D-mannosamine + ATP = an N-acyl-D-mannosamine 6-phosphate + ADP + H(+). It functions in the pathway amino-sugar metabolism; N-acetylneuraminate degradation; D-fructose 6-phosphate from N-acetylneuraminate: step 2/5. Functionally, catalyzes the phosphorylation of N-acetylmannosamine (ManNAc) to ManNAc-6-P. The protein is N-acetylmannosamine kinase of Haemophilus influenzae (strain PittGG).